A 396-amino-acid chain; its full sequence is Elongation factor Tu (396 aa).

The tr-type G domain occupies 10-206 (KPHVNVGTIG…ALDTYIPTPE (197 aa)). The interval 19-26 (GHVDHGKT) is G1. 19-26 (GHVDHGKT) contacts GTP. Threonine 26 contacts Mg(2+). The segment at 60-64 (GITIN) is G2. Residues 81–84 (DCPG) form a G3 region. Residues 81 to 85 (DCPGH) and 136 to 139 (NKCD) each bind GTP. The G4 stretch occupies residues 136-139 (NKCD). Residues 174-176 (SAK) form a G5 region.

This sequence belongs to the TRAFAC class translation factor GTPase superfamily. Classic translation factor GTPase family. EF-Tu/EF-1A subfamily. As to quaternary structure, monomer.

It is found in the cytoplasm. It carries out the reaction GTP + H2O = GDP + phosphate + H(+). Functionally, GTP hydrolase that promotes the GTP-dependent binding of aminoacyl-tRNA to the A-site of ribosomes during protein biosynthesis. This is Elongation factor Tu from Cupriavidus necator (strain ATCC 17699 / DSM 428 / KCTC 22496 / NCIMB 10442 / H16 / Stanier 337) (Ralstonia eutropha).